The primary structure comprises 143 residues: Transcriptional regulator MraZ (143 aa).

2 consecutive SpoVT-AbrB domains span residues 5–47 (EFEH…PMTE) and 76–119 (ATEC…SAER).

It belongs to the MraZ family. Forms oligomers.

The protein resides in the cytoplasm. It localises to the nucleoid. In Levilactobacillus brevis (strain ATCC 367 / BCRC 12310 / CIP 105137 / JCM 1170 / LMG 11437 / NCIMB 947 / NCTC 947) (Lactobacillus brevis), this protein is Transcriptional regulator MraZ.